Here is a 283-residue protein sequence, read N- to C-terminus: Protease HtpX (283 aa).

The next 2 membrane-spanning stretches (helical) occupy residues 4–24 (ILLFLATNMAVMLVLGIILSV) and 33–53 (GGILIMALLFGFAGSLISLFL). Position 139 (histidine 139) interacts with Zn(2+). The active site involves glutamate 140. Histidine 143 is a Zn(2+) binding site. 2 helical membrane-spanning segments follow: residues 147 to 167 (GDMVTMALLQGVLNTFVIFLS) and 190 to 210 (IYFLVSMVLEMLFGVLASIIA). Residue glutamate 218 participates in Zn(2+) binding.

The protein belongs to the peptidase M48B family. Requires Zn(2+) as cofactor.

Its subcellular location is the cell inner membrane. The protein is Protease HtpX of Haemophilus influenzae (strain PittEE).